Here is a 194-residue protein sequence, read N- to C-terminus: Clathrin light chain (194 aa).

The segment at 44–156 (TTFDNSNNNN…TDSTSGNTTH (113 aa)) is disordered. A compositionally biased stretch (low complexity) spans 48 to 65 (NSNNNNNNNNHNNNSYNS). Basic and acidic residues-rich tracts occupy residues 89–115 (EYLE…KIAE) and 124–146 (YSER…KSLE). Positions 124 to 194 (YSEREAKKKT…LIRLKNQPIV (71 aa)) are required for binding clathrin heavy chain, localization to punctae, and for cytokinesis and fruiting body development. The segment covering 147–156 (TDSTSGNTTH) has biased composition (polar residues).

The protein belongs to the clathrin light chain family. In terms of assembly, clathrin coats are formed from molecules containing 3 heavy chains and 3 light chains.

It is found in the cytoplasmic vesicle membrane. Its subcellular location is the membrane. The protein resides in the coated pit. Its function is as follows. Clathrin is the major protein of the polyhedral coat of coated pits and vesicles. The sequence is that of Clathrin light chain (clc) from Dictyostelium discoideum (Social amoeba).